Consider the following 204-residue polypeptide: Probable UbiX-like flavin prenyltransferase (204 aa).

FMN is bound by residues 21–23 (GAT), S47, 98–101 (SMKS), and R133.

It belongs to the UbiX/PAD1 family. YclB subfamily. As to quaternary structure, homododecamer.

It carries out the reaction dimethylallyl phosphate + FMNH2 = prenylated FMNH2 + phosphate. Functionally, involved in the non-oxidative decarboxylation and detoxification of phenolic derivatives under both aerobic and anaerobic conditions. Flavin prenyltransferase that catalyzes the synthesis of the prenylated FMN cofactor (prenyl-FMN) for phenolic acid decarboxylase. This chain is Probable UbiX-like flavin prenyltransferase, found in Bacillus subtilis (strain 168).